The chain runs to 728 residues: Ankyrin repeat protein A (728 aa).

ANK repeat units follow at residues 381 to 410 (INLP…ETGY), 429 to 458 (NGFS…KLAA), 477 to 506 (TSSH…LLIR), 525 to 554 (YGCP…SLAQ), and 573 to 602 (ARDT…TLFN).

This sequence belongs to the Toxin_15 family.

The chain is Ankyrin repeat protein A (arpA) from Escherichia coli (strain K12).